The following is a 466-amino-acid chain: Asparagine--tRNA ligase (466 aa).

It belongs to the class-II aminoacyl-tRNA synthetase family. In terms of assembly, homodimer.

It is found in the cytoplasm. The enzyme catalyses tRNA(Asn) + L-asparagine + ATP = L-asparaginyl-tRNA(Asn) + AMP + diphosphate + H(+). This Xylella fastidiosa (strain Temecula1 / ATCC 700964) protein is Asparagine--tRNA ligase.